We begin with the raw amino-acid sequence, 545 residues long: MAKEIKFDMESRDLLKKGVDALANAVKVTLGPKGRNVILSKTYGAPHITKDGVSVAKEIELECPFENMGAQLVKEVASKTNDDAGDGTTTATILAQSIIGVGLKNVTAGANPMDLKRGIDKAVKAVVTHIAGMAKEVGDDFQKIEHVAKISANGDENIGSLIAEAMRKVKKEGVITVEEAKGTDTTVEVVEGMQFDRGYISPYFVTNTDKMEVQMENPFILIYDKKISVLKEMLPILEQTVQTGKPLLIIAEDIDSEALATLVVNRLRGSLKICAVKAPGFGDRRKAMLEDIAILTGGTVISEETGLKLENATMDMLGTAEKVTVDKDNTTIVNGAGNKEGIASRITQIKAQIENTTSDYDREKLQERLAKLAGGVAVLYVGAASEVEMKEKKDRVEDALSATRAAIEEGTVPGGGTAYIRAIAALEGLKGENEDETTGIEIVKRAIEEPLRQIVANAGKEGAVVVQKVKEGKDDFGYNARTDVFENLYSTGVIDPAKVTRVALENAASIAGMFLTTECVIADKKEDNPAAPAMPGGMGGMGGMM.

Residues 29 to 32, Lys-50, 86 to 90, Gly-415, and Asp-495 contribute to the ATP site; these read TLGP and DGTTT.

It belongs to the chaperonin (HSP60) family. Forms a cylinder of 14 subunits composed of two heptameric rings stacked back-to-back. Interacts with the co-chaperonin GroES.

It is found in the cytoplasm. The catalysed reaction is ATP + H2O + a folded polypeptide = ADP + phosphate + an unfolded polypeptide.. Functionally, together with its co-chaperonin GroES, plays an essential role in assisting protein folding. The GroEL-GroES system forms a nano-cage that allows encapsulation of the non-native substrate proteins and provides a physical environment optimized to promote and accelerate protein folding. This chain is Chaperonin GroEL, found in Porphyromonas gingivalis (strain ATCC 33277 / DSM 20709 / CIP 103683 / JCM 12257 / NCTC 11834 / 2561).